The primary structure comprises 331 residues: DNA-directed RNA polymerase subunit alpha (331 aa).

Residues 1 to 226 (MLIAQRPTLT…ELFGLARELN (226 aa)) are alpha N-terminal domain (alpha-NTD). The interval 243-331 (LSSELSMPIE…SYDEDETTTN (89 aa)) is alpha C-terminal domain (alpha-CTD).

This sequence belongs to the RNA polymerase alpha chain family. Homodimer. The RNAP catalytic core consists of 2 alpha, 1 beta, 1 beta' and 1 omega subunit. When a sigma factor is associated with the core the holoenzyme is formed, which can initiate transcription.

The catalysed reaction is RNA(n) + a ribonucleoside 5'-triphosphate = RNA(n+1) + diphosphate. Its function is as follows. DNA-dependent RNA polymerase catalyzes the transcription of DNA into RNA using the four ribonucleoside triphosphates as substrates. The chain is DNA-directed RNA polymerase subunit alpha from Clavibacter sepedonicus (Clavibacter michiganensis subsp. sepedonicus).